Reading from the N-terminus, the 509-residue chain is ATP synthase subunit alpha (509 aa).

169 to 176 (GDRQTGKT) contacts ATP.

The protein belongs to the ATPase alpha/beta chains family. In terms of assembly, F-type ATPases have 2 components, CF(1) - the catalytic core - and CF(0) - the membrane proton channel. CF(1) has five subunits: alpha(3), beta(3), gamma(1), delta(1), epsilon(1). CF(0) has three main subunits: a(1), b(2) and c(9-12). The alpha and beta chains form an alternating ring which encloses part of the gamma chain. CF(1) is attached to CF(0) by a central stalk formed by the gamma and epsilon chains, while a peripheral stalk is formed by the delta and b chains.

Its subcellular location is the cell inner membrane. The catalysed reaction is ATP + H2O + 4 H(+)(in) = ADP + phosphate + 5 H(+)(out). Its function is as follows. Produces ATP from ADP in the presence of a proton gradient across the membrane. The alpha chain is a regulatory subunit. In Bradyrhizobium diazoefficiens (strain JCM 10833 / BCRC 13528 / IAM 13628 / NBRC 14792 / USDA 110), this protein is ATP synthase subunit alpha.